Reading from the N-terminus, the 213-residue chain is Thymidylate kinase (213 aa).

Glycine 10 to threonine 17 contributes to the ATP binding site.

It belongs to the thymidylate kinase family.

It carries out the reaction dTMP + ATP = dTDP + ADP. Its function is as follows. Phosphorylation of dTMP to form dTDP in both de novo and salvage pathways of dTTP synthesis. The chain is Thymidylate kinase from Escherichia coli O1:K1 / APEC.